Reading from the N-terminus, the 236-residue chain is Thrombin-like enzyme kangshuanmei (236 aa).

A Peptidase S1 domain is found at 1–227 (VIGGDECNIN…HLDWIQSIIA (227 aa)). Intrachain disulfides connect C7–C141, C28–C44, C78–C234, C120–C188, C152–C167, and C178–C203. The active-site Charge relay system is H43. Residue N81 is glycosylated (N-linked (GlcNAc...) asparagine). D88 serves as the catalytic Charge relay system. N-linked (GlcNAc...) asparagine glycosylation is found at N99 and N148. The Charge relay system role is filled by S182. Residue N229 is glycosylated (N-linked (GlcNAc...) asparagine).

Belongs to the peptidase S1 family. Snake venom subfamily. Monomer. In terms of processing, N-glycosylated by units composed of Fuc, Man, GlcNAc, Gal and NeuAC residues. Expressed by the venom gland.

The protein resides in the secreted. Its activity is regulated as follows. Inhibited by 4-(2-aminoethyl)-benzensulfonyl fluoride. Not inhibited by antithrombin-III. Functionally, thrombin-like snake venom serine protease. Cleaves bonds after Arg and Lys, converts fibrinogen (FGA and FGB) to fibrin and releases both fibrinopeptides A and B, and fibrinogen peptide Bbeta1-42. Has a blood clotting activity. This is Thrombin-like enzyme kangshuanmei from Gloydius brevicauda (Korean slamosa snake).